We begin with the raw amino-acid sequence, 150 residues long: MQVILLDKVANLGSLGDQVNVKAGYARNFLVPQGKAVPATKKNVEFFEARRAELEAKLAGVLAAAEARATKINELVSVTIASKAGDEGKLFGSIGTRDIADAVTAAGVEVAKSEVRLPNGVLRTTGDHEVHFQVHSDVFAKLNVIVVPEA.

This sequence belongs to the bacterial ribosomal protein bL9 family.

Functionally, binds to the 23S rRNA. In Yersinia enterocolitica serotype O:8 / biotype 1B (strain NCTC 13174 / 8081), this protein is Large ribosomal subunit protein bL9.